We begin with the raw amino-acid sequence, 529 residues long: Peptide chain release factor 3 (529 aa).

In terms of domain architecture, tr-type G spans 10–279; that stretch reads EQRRCFGIIS…ALVEMAPAPG (270 aa). GTP is bound by residues 19–26, 87–91, and 141–144; these read SHPDAGKT, DTPGH, and NKMD.

This sequence belongs to the TRAFAC class translation factor GTPase superfamily. Classic translation factor GTPase family. PrfC subfamily.

Its subcellular location is the cytoplasm. Increases the formation of ribosomal termination complexes and stimulates activities of RF-1 and RF-2. It binds guanine nucleotides and has strong preference for UGA stop codons. It may interact directly with the ribosome. The stimulation of RF-1 and RF-2 is significantly reduced by GTP and GDP, but not by GMP. The protein is Peptide chain release factor 3 of Desulfatibacillum aliphaticivorans.